The following is a 138-amino-acid chain: ATP synthase epsilon chain (138 aa).

The protein belongs to the ATPase epsilon chain family. F-type ATPases have 2 components, CF(1) - the catalytic core - and CF(0) - the membrane proton channel. CF(1) has five subunits: alpha(3), beta(3), gamma(1), delta(1), epsilon(1). CF(0) has three main subunits: a, b and c.

It is found in the cell inner membrane. In terms of biological role, produces ATP from ADP in the presence of a proton gradient across the membrane. This chain is ATP synthase epsilon chain, found in Polaromonas sp. (strain JS666 / ATCC BAA-500).